Reading from the N-terminus, the 496-residue chain is 7,8-epoxymelianol synthase CYP88A154 (496 aa).

Residues 11–31 (FNFLWLILAIFVGTYVVLFGF) traverse the membrane as a helical segment. Cysteine 444 provides a ligand contact to heme.

The protein belongs to the cytochrome P450 family. Heme is required as a cofactor.

Its subcellular location is the membrane. It carries out the reaction melianol + reduced [NADPH--hemoprotein reductase] + O2 = 7,8-epoxymelianol + oxidized [NADPH--hemoprotein reductase] + H2O + H(+). The protein operates within secondary metabolite biosynthesis; terpenoid biosynthesis. Its function is as follows. Monooxygenase involved in the biosynthesis of glabretanes, limonoids and quassinoids triterpene natural products such as ailanthone, chaparrinone, glaucarubinone and amarolide, allelopathic degraded triterpene lactones inhibiting the growth of other plants, and possessing antimalarial, antifeedant, insecticidal, anti-inflammatory and anticancer activities. Catalyzes the epoxidation of melianol to produce 7,8-epoxymelianol. The polypeptide is 7,8-epoxymelianol synthase CYP88A154 (Ailanthus altissima (Tree-of-heaven)).